The primary structure comprises 300 residues: Manganese-binding lipoprotein MntA (300 aa).

A signal peptide spans 1 to 19 (MKKVCFSFVIMVIALIAAG). C20 carries N-palmitoyl cysteine lipidation. C20 is lipidated: S-diacylglycerol cysteine. 4 residues coordinate Mn(2+): H68, H130, E196, and D271.

This sequence belongs to the bacterial solute-binding protein 9 family.

It is found in the cell membrane. Its function is as follows. Probably part of ATP-binding cassette (ABC) transport system MntABCD involved in manganese import. Binds manganese and delivers it to the membrane permease for translocation into the cytoplasm. The sequence is that of Manganese-binding lipoprotein MntA (mntA) from Halalkalibacterium halodurans (strain ATCC BAA-125 / DSM 18197 / FERM 7344 / JCM 9153 / C-125) (Bacillus halodurans).